The sequence spans 122 residues: Large ribosomal subunit protein eL18 (122 aa).

It belongs to the eukaryotic ribosomal protein eL18 family.

In Thermoplasma volcanium (strain ATCC 51530 / DSM 4299 / JCM 9571 / NBRC 15438 / GSS1), this protein is Large ribosomal subunit protein eL18.